The chain runs to 348 residues: Phosphate acyltransferase (348 aa).

The protein belongs to the PlsX family. In terms of assembly, homodimer. Probably interacts with PlsY.

The protein resides in the cytoplasm. The catalysed reaction is a fatty acyl-[ACP] + phosphate = an acyl phosphate + holo-[ACP]. The protein operates within lipid metabolism; phospholipid metabolism. Catalyzes the reversible formation of acyl-phosphate (acyl-PO(4)) from acyl-[acyl-carrier-protein] (acyl-ACP). This enzyme utilizes acyl-ACP as fatty acyl donor, but not acyl-CoA. The protein is Phosphate acyltransferase of Francisella tularensis subsp. tularensis (strain FSC 198).